We begin with the raw amino-acid sequence, 330 residues long: Aspartate--ammonia ligase (330 aa).

It belongs to the class-II aminoacyl-tRNA synthetase family. AsnA subfamily.

Its subcellular location is the cytoplasm. It catalyses the reaction L-aspartate + NH4(+) + ATP = L-asparagine + AMP + diphosphate + H(+). It participates in amino-acid biosynthesis; L-asparagine biosynthesis; L-asparagine from L-aspartate (ammonia route): step 1/1. The polypeptide is Aspartate--ammonia ligase (Salmonella newport (strain SL254)).